Here is a 473-residue protein sequence, read N- to C-terminus: Sensor histidine kinase GtrS (473 aa).

The Cytoplasmic segment spans residues Met-1–Arg-8. A helical membrane pass occupies residues Met-9–Leu-29. Topologically, residues Ser-30–Gln-197 are periplasmic. A helical transmembrane segment spans residues Val-198–Trp-218. Residues His-217–Asn-269 form the HAMP domain. At Gln-219–Glu-473 the chain is on the cytoplasmic side. In terms of domain architecture, Histidine kinase spans Ala-277–Gly-471. A Phosphohistidine; by autocatalysis modification is found at His-280.

In terms of processing, autophosphorylated.

It localises to the cell inner membrane. It catalyses the reaction ATP + protein L-histidine = ADP + protein N-phospho-L-histidine.. Functionally, member of the two-component regulatory system GtrS/GltR involved in the regulation of glucose metabolism and transport, as well as regulation of the exotoxin A gene expression. GtrS recognizes and binds 2-ketogluconate and 6-phosphogluconate via its sensor domain, which accelerates GtrS autophosphorylation and concomitant transphosphorylation and regulation of the response regulator GltR. Its function is as follows. Plays a key role during bacteria-host interactions and is required for optimal colonization and dissemination in a mouse model of infection. Contributes to modulation of the type III secretion system (T3SS) in response to host cells via the regulation of the OprB transport system. This Pseudomonas aeruginosa (strain ATCC 15692 / DSM 22644 / CIP 104116 / JCM 14847 / LMG 12228 / 1C / PRS 101 / PAO1) protein is Sensor histidine kinase GtrS.